The chain runs to 445 residues: ATP-dependent protease ATPase subunit HslU (445 aa).

ATP contacts are provided by residues Ile-17, Gly-59 to Glu-64, Asp-254, Glu-319, and Arg-391.

This sequence belongs to the ClpX chaperone family. HslU subfamily. As to quaternary structure, a double ring-shaped homohexamer of HslV is capped on each side by a ring-shaped HslU homohexamer. The assembly of the HslU/HslV complex is dependent on binding of ATP.

It is found in the cytoplasm. ATPase subunit of a proteasome-like degradation complex; this subunit has chaperone activity. The binding of ATP and its subsequent hydrolysis by HslU are essential for unfolding of protein substrates subsequently hydrolyzed by HslV. HslU recognizes the N-terminal part of its protein substrates and unfolds these before they are guided to HslV for hydrolysis. The sequence is that of ATP-dependent protease ATPase subunit HslU from Pseudomonas fluorescens (strain Pf0-1).